We begin with the raw amino-acid sequence, 127 residues long: Spore germination protein 2 (127 aa).

An N-terminal signal peptide occupies residues 1 to 25; that stretch reads MNIRNSLILIISTILFFSIINGSLS. 2 N-linked (GlcNAc...) asparagine glycosylation sites follow: Asn-54 and Asn-118.

The protein belongs to the Dictyostelium gerABC family.

The protein localises to the secreted. The sequence is that of Spore germination protein 2 (gerB) from Dictyostelium discoideum (Social amoeba).